Consider the following 296-residue polypeptide: ATP synthase gamma chain (296 aa).

It belongs to the ATPase gamma chain family. In terms of assembly, F-type ATPases have 2 components, CF(1) - the catalytic core - and CF(0) - the membrane proton channel. CF(1) has five subunits: alpha(3), beta(3), gamma(1), delta(1), epsilon(1). CF(0) has three main subunits: a, b and c.

The protein localises to the cell inner membrane. In terms of biological role, produces ATP from ADP in the presence of a proton gradient across the membrane. The gamma chain is believed to be important in regulating ATPase activity and the flow of protons through the CF(0) complex. The sequence is that of ATP synthase gamma chain from Gluconobacter oxydans (strain 621H) (Gluconobacter suboxydans).